A 972-amino-acid polypeptide reads, in one-letter code: Isoleucine--tRNA ligase (972 aa).

The 'HIGH' region motif lies at 63-73 (PYANGNIHIGH). Glutamate 603 is an L-isoleucyl-5'-AMP binding site. A 'KMSKS' region motif is present at residues 644-648 (KMSKS). ATP is bound at residue lysine 647.

Belongs to the class-I aminoacyl-tRNA synthetase family. IleS type 1 subfamily. Monomer.

The protein resides in the cytoplasm. The catalysed reaction is tRNA(Ile) + L-isoleucine + ATP = L-isoleucyl-tRNA(Ile) + AMP + diphosphate. Its function is as follows. Catalyzes the attachment of isoleucine to tRNA(Ile). As IleRS can inadvertently accommodate and process structurally similar amino acids such as valine, to avoid such errors it has two additional distinct tRNA(Ile)-dependent editing activities. One activity is designated as 'pretransfer' editing and involves the hydrolysis of activated Val-AMP. The other activity is designated 'posttransfer' editing and involves deacylation of mischarged Val-tRNA(Ile). The sequence is that of Isoleucine--tRNA ligase from Brucella suis biovar 1 (strain 1330).